Consider the following 82-residue polypeptide: Small ribosomal subunit protein bS18 (82 aa).

The segment at 1-20 (MSEASSAPVRRPFHRRRKTC) is disordered.

It belongs to the bacterial ribosomal protein bS18 family. As to quaternary structure, part of the 30S ribosomal subunit. Forms a tight heterodimer with protein bS6.

Its function is as follows. Binds as a heterodimer with protein bS6 to the central domain of the 16S rRNA, where it helps stabilize the platform of the 30S subunit. This Rhizobium etli (strain CIAT 652) protein is Small ribosomal subunit protein bS18.